The following is a 215-amino-acid chain: Histidine biosynthesis bifunctional protein HisIE (215 aa).

Residues 1–126 (MSHSDLPLAN…GHKSPPPADM (126 aa)) are phosphoribosyl-AMP cyclohydrolase. Positions 127–215 (LTELARVIGD…VYRKLGDRRR (89 aa)) are phosphoribosyl-ATP pyrophosphohydrolase.

This sequence in the N-terminal section; belongs to the PRA-CH family. It in the C-terminal section; belongs to the PRA-PH family.

It localises to the cytoplasm. The enzyme catalyses 1-(5-phospho-beta-D-ribosyl)-ATP + H2O = 1-(5-phospho-beta-D-ribosyl)-5'-AMP + diphosphate + H(+). It carries out the reaction 1-(5-phospho-beta-D-ribosyl)-5'-AMP + H2O = 1-(5-phospho-beta-D-ribosyl)-5-[(5-phospho-beta-D-ribosylamino)methylideneamino]imidazole-4-carboxamide. It functions in the pathway amino-acid biosynthesis; L-histidine biosynthesis; L-histidine from 5-phospho-alpha-D-ribose 1-diphosphate: step 2/9. Its pathway is amino-acid biosynthesis; L-histidine biosynthesis; L-histidine from 5-phospho-alpha-D-ribose 1-diphosphate: step 3/9. The chain is Histidine biosynthesis bifunctional protein HisIE (hisI) from Synechocystis sp. (strain ATCC 27184 / PCC 6803 / Kazusa).